We begin with the raw amino-acid sequence, 395 residues long: 1-deoxy-D-xylulose 5-phosphate reductoisomerase (395 aa).

The NADPH site is built by threonine 15, glycine 16, serine 17, isoleucine 18, glycine 41, asparagine 43, and asparagine 126. Lysine 127 serves as a coordination point for 1-deoxy-D-xylulose 5-phosphate. Residue glutamate 128 participates in NADPH binding. A Mn(2+)-binding site is contributed by aspartate 152. 1-deoxy-D-xylulose 5-phosphate-binding residues include serine 153, glutamate 154, serine 178, and histidine 201. A Mn(2+)-binding site is contributed by glutamate 154. Glycine 207 lines the NADPH pocket. 4 residues coordinate 1-deoxy-D-xylulose 5-phosphate: serine 214, asparagine 219, lysine 220, and glutamate 223. Glutamate 223 lines the Mn(2+) pocket.

It belongs to the DXR family. The cofactor is Mg(2+). Requires Mn(2+) as cofactor.

It catalyses the reaction 2-C-methyl-D-erythritol 4-phosphate + NADP(+) = 1-deoxy-D-xylulose 5-phosphate + NADPH + H(+). The protein operates within isoprenoid biosynthesis; isopentenyl diphosphate biosynthesis via DXP pathway; isopentenyl diphosphate from 1-deoxy-D-xylulose 5-phosphate: step 1/6. Functionally, catalyzes the NADPH-dependent rearrangement and reduction of 1-deoxy-D-xylulose-5-phosphate (DXP) to 2-C-methyl-D-erythritol 4-phosphate (MEP). This chain is 1-deoxy-D-xylulose 5-phosphate reductoisomerase, found in Ruegeria pomeroyi (strain ATCC 700808 / DSM 15171 / DSS-3) (Silicibacter pomeroyi).